We begin with the raw amino-acid sequence, 82 residues long: Small ribosomal subunit protein uS17 (82 aa).

Belongs to the universal ribosomal protein uS17 family. In terms of assembly, part of the 30S ribosomal subunit.

Functionally, one of the primary rRNA binding proteins, it binds specifically to the 5'-end of 16S ribosomal RNA. This chain is Small ribosomal subunit protein uS17, found in Shewanella denitrificans (strain OS217 / ATCC BAA-1090 / DSM 15013).